Here is a 361-residue protein sequence, read N- to C-terminus: Transcription factor MafA (361 aa).

S14 is modified (phosphoserine). K32 is covalently cross-linked (Glycyl lysine isopeptide (Lys-Gly) (interchain with G-Cter in SUMO2)). Disordered stretches follow at residues 40-105 (RFCH…VGGA) and 175-228 (GGAD…AGHH). Positions 46–76 (PPGSLSSTPLSTPCSSVPSSPSFCAPSPGTG) are enriched in low complexity. S49 is subject to Phosphoserine. T53 and T57 each carry phosphothreonine. Residues S61 and S65 each carry the phosphoserine modification. The span at 183-211 (GHHHGAHHTAHHHHSAHHHHHHHHHHGGS) shows a compositional bias: basic residues. Positions 212 to 226 (GHHGGGAGHGGGGAG) are enriched in gly residues. Residues 262-287 (RLKQKRRTLKNRGYAQSCRFKRVQQR) form a basic motif region. Positions 262-325 (RLKQKRRTLK…DLYKEKYEKL (64 aa)) constitute a bZIP domain. Residues 290 to 311 (LESEKCQLQSQVEQLKLEVGRL) are leucine-zipper. Positions 324 to 361 (KLAGRGGPGGAGGAGFPREPSPAQAGPGAAKGAPDFFL) are disordered. A compositionally biased stretch (gly residues) spans 327 to 338 (GRGGPGGAGGAG). Positions 345 to 361 (PAQAGPGAAKGAPDFFL) are enriched in low complexity.

It belongs to the bZIP family. Forms homodimers. Monomers and dimers are able to bind DNA, but the off-rate is faster for monomers. Interacts with NEUROD1 and PDX1. May interact with MAFB, FOS, JUN and PCAF. Post-translationally, ubiquitinated, leading to its degradation by the proteasome. Phosphorylated at tyrosines.

The protein resides in the nucleus. Functionally, transcription factor that activates insulin gene expression. Acts synergistically with NEUROD1/BETA2 and PDX1. Binds the insulin enhancer C1/RIPE3b element. Binds to consensus TRE-type MARE 5'-TGCTGACTCAGCA-3' DNA sequence. The chain is Transcription factor MafA (Mafa) from Rattus norvegicus (Rat).